A 101-amino-acid chain; its full sequence is Small ribosomal subunit protein bS18c (101 aa).

This sequence belongs to the bacterial ribosomal protein bS18 family. In terms of assembly, part of the 30S ribosomal subunit.

The protein localises to the plastid. It is found in the chloroplast. The polypeptide is Small ribosomal subunit protein bS18c (Panax ginseng (Korean ginseng)).